The following is a 241-amino-acid chain: DNA repair protein RecO (241 aa).

The protein belongs to the RecO family.

In terms of biological role, involved in DNA repair and RecF pathway recombination. The chain is DNA repair protein RecO from Dinoroseobacter shibae (strain DSM 16493 / NCIMB 14021 / DFL 12).